The chain runs to 143 residues: Nucleoside diphosphate kinase (143 aa).

6 residues coordinate ATP: Lys11, Phe59, Arg87, Thr93, Arg104, and Asn114. Catalysis depends on His117, which acts as the Pros-phosphohistidine intermediate.

This sequence belongs to the NDK family. Homotetramer. Requires Mg(2+) as cofactor.

The protein resides in the cytoplasm. It catalyses the reaction a 2'-deoxyribonucleoside 5'-diphosphate + ATP = a 2'-deoxyribonucleoside 5'-triphosphate + ADP. It carries out the reaction a ribonucleoside 5'-diphosphate + ATP = a ribonucleoside 5'-triphosphate + ADP. Functionally, major role in the synthesis of nucleoside triphosphates other than ATP. The ATP gamma phosphate is transferred to the NDP beta phosphate via a ping-pong mechanism, using a phosphorylated active-site intermediate. This is Nucleoside diphosphate kinase from Sodalis glossinidius (strain morsitans).